Consider the following 707-residue polypeptide: Coiled-coil domain-containing protein 177 (707 aa).

Disordered regions lie at residues 1-65 and 183-294; these read MVDP…EGGR and PSAG…SALT. 3 stretches are compositionally biased toward low complexity: residues 38 to 49, 183 to 215, and 243 to 258; these read AASSASASASAA, PSAG…PSSA, and ALSS…YSGE. Ser-311 carries the phosphoserine modification. A coiled-coil region spans residues 364-605; the sequence is GQWELQRVHA…LQHATQVAEE (242 aa). Disordered stretches follow at residues 372–426, 454–581, 597–637, and 652–707; these read HAKQ…RSEE, KLQQ…EREH, QHAT…RDED, and ERSE…LDRK. Composition is skewed to basic and acidic residues over residues 377–392, 399–426, 454–484, 491–514, 543–581, 618–637, and 652–664; these read RERE…EQGR, VEER…RSEE, KLQQ…ERAQ, QRQE…RHEA, ENYE…EREH, RLEK…RDED, and ERSE…RRSA. Residues 665–675 are compositionally biased toward low complexity; it reads LESARSTARAS. Positions 677-707 are enriched in basic and acidic residues; that stretch reads HVREKVREETNTRSFDRMVREAQLHASLDRK.

This Homo sapiens (Human) protein is Coiled-coil domain-containing protein 177 (CCDC177).